Reading from the N-terminus, the 272-residue chain is Acyl-[acyl-carrier-protein]--UDP-N-acetylglucosamine O-acyltransferase (272 aa).

The protein belongs to the transferase hexapeptide repeat family. LpxA subfamily. As to quaternary structure, homotrimer.

Its subcellular location is the cytoplasm. It catalyses the reaction a (3R)-hydroxyacyl-[ACP] + UDP-N-acetyl-alpha-D-glucosamine = a UDP-3-O-[(3R)-3-hydroxyacyl]-N-acetyl-alpha-D-glucosamine + holo-[ACP]. It functions in the pathway glycolipid biosynthesis; lipid IV(A) biosynthesis; lipid IV(A) from (3R)-3-hydroxytetradecanoyl-[acyl-carrier-protein] and UDP-N-acetyl-alpha-D-glucosamine: step 1/6. Involved in the biosynthesis of lipid A, a phosphorylated glycolipid that anchors the lipopolysaccharide to the outer membrane of the cell. The protein is Acyl-[acyl-carrier-protein]--UDP-N-acetylglucosamine O-acyltransferase of Methylobacterium radiotolerans (strain ATCC 27329 / DSM 1819 / JCM 2831 / NBRC 15690 / NCIMB 10815 / 0-1).